Reading from the N-terminus, the 272-residue chain is MARLAAFDMDGTLLMPDHHLGRETIATLARLRERDITLTFATGRHVLEMRHILGTLSLDAYLITGNGTRIHSLEGDVLHRQDLDPQVADTVMHHAWDTRASMHVFNDNGWFTGQEIPALLQAHVYSGFRYQVIDIKSIPAHQVTKICFCGDHDDLIRLRIQLNETLEERAHLCFSAVDCLEVLPLGCNKGSALAVLSNHLGLSLADCMAFGDAMNDREMLGSVGRGLIMGNAMPQLIAALPHLSVIGHCGNQAVSHFLTHWLDNPHLPYSPE.

The active-site Nucleophile is the Asp8. Asp8, Asp10, and Asp212 together coordinate Mg(2+).

Belongs to the HAD-like hydrolase superfamily. Cof family. The cofactor is Mg(2+).

It carries out the reaction 4-amino-2-methyl-5-(diphosphooxymethyl)pyrimidine + H2O = 4-amino-2-methyl-5-(phosphooxymethyl)pyrimidine + phosphate + H(+). Its function is as follows. Catalyzes the hydrolysis of 4-amino-2-methyl-5-hydroxymethylpyrimidine pyrophosphate (HMP-PP) to 4-amino-2-methyl-5-hydroxymethylpyrimidine phosphate (HMP-P). The sequence is that of HMP-PP phosphatase from Salmonella newport (strain SL254).